The following is a 501-amino-acid chain: Glutamyl-tRNA(Gln) amidotransferase subunit A (501 aa).

Residues lysine 84 and serine 159 each act as charge relay system in the active site. Residue serine 183 is the Acyl-ester intermediate of the active site.

The protein belongs to the amidase family. GatA subfamily. As to quaternary structure, heterotrimer of A, B and C subunits.

The enzyme catalyses L-glutamyl-tRNA(Gln) + L-glutamine + ATP + H2O = L-glutaminyl-tRNA(Gln) + L-glutamate + ADP + phosphate + H(+). Functionally, allows the formation of correctly charged Gln-tRNA(Gln) through the transamidation of misacylated Glu-tRNA(Gln) in organisms which lack glutaminyl-tRNA synthetase. The reaction takes place in the presence of glutamine and ATP through an activated gamma-phospho-Glu-tRNA(Gln). The protein is Glutamyl-tRNA(Gln) amidotransferase subunit A of Streptomyces avermitilis (strain ATCC 31267 / DSM 46492 / JCM 5070 / NBRC 14893 / NCIMB 12804 / NRRL 8165 / MA-4680).